Here is a 509-residue protein sequence, read N- to C-terminus: Histidine ammonia-lyase (509 aa).

Positions 142–144 form a cross-link, 5-imidazolinone (Ala-Gly); sequence ASG. The residue at position 143 (Ser-143) is a 2,3-didehydroalanine (Ser).

This sequence belongs to the PAL/histidase family. Post-translationally, contains an active site 4-methylidene-imidazol-5-one (MIO), which is formed autocatalytically by cyclization and dehydration of residues Ala-Ser-Gly.

It localises to the cytoplasm. It catalyses the reaction L-histidine = trans-urocanate + NH4(+). It functions in the pathway amino-acid degradation; L-histidine degradation into L-glutamate; N-formimidoyl-L-glutamate from L-histidine: step 1/3. The chain is Histidine ammonia-lyase from Pseudomonas aeruginosa (strain LESB58).